We begin with the raw amino-acid sequence, 207 residues long: Outer-membrane lipoprotein LolB (207 aa).

Residues 1-21 form the signal peptide; sequence MPLPDFRLIRLLPLAALVLTA. The N-palmitoyl cysteine moiety is linked to residue cysteine 22. The S-diacylglycerol cysteine moiety is linked to residue cysteine 22.

Belongs to the LolB family. In terms of assembly, monomer.

It is found in the cell outer membrane. Its function is as follows. Plays a critical role in the incorporation of lipoproteins in the outer membrane after they are released by the LolA protein. The chain is Outer-membrane lipoprotein LolB from Escherichia coli (strain K12 / MC4100 / BW2952).